The chain runs to 804 residues: MDLPVDEWKSYLLQKWASLPTSVQVTISTAETLRDIFLHSSSLLQPEDELFLKRLSKGYLVGKDSDAPLFYREEGNKKFQEKDYTGAAVLYSKGVSHSRPNTEDMSLCHANRSAALFHLGQYETCLKDINRAQTHGYPERLQPKIMLRKAECLVALGRLQEASQTISDLERNFTATPALADVLPQTLQRNLHRLKMKMQEKDSLTESFPAALAKTLEDAALREENEQLSNASSSIGLCVDPLKGRCLVATKDILPGELLVQEDAFVSVLNPGELPPPHHGLDSKWDTRVTNGDLYCHRCLKHTLATVPCDGCSYAKYCSQECLQQAWELYHRTECPLGGLLLTLGVFCHIALRLTLLVGFEDVRKIITKLCDKISNKDICLPESNNQVKTLNYGLGESEKNGNIVETPIPGCDINGKYENNYNAVFNLLPHTENHSPEHKFLCALCVSALCRQLEAASLQAIPTERIVNSSQLKAAVTPELCPDVTIWGVAMLRHMLQLQCNAQAMTTIQHTGPKGSIVTDSRQVRLATGIFPVISLLNHSCSPNTSVSFISTVATIRASQRIRKGQEILHCYGPHKSRMGVAERQQKLRSQYFFDCACPACQTEAHRMAAGPRWEAFCCNSCGAPMQGDDVLRCGSRSCAESAVSRDHLVSRLQDLQQQVRVAQKLLRDGELERAVQRLSGCQRDAESFLWAEHAVVGEIADGLARACAALGDWQKSATHLQRSLYVVEVRHGPSSVEMGHELFKLAQIFFNGFAVPEALSTIQKAEEVLSLHCGPWDDEIQELQKMKSCLLDLPPTPVGPAL.

112-114 (RSA) is an S-adenosyl-L-methionine binding site. Residues 233–574 (SSIGLCVDPL…KGQEILHCYG (342 aa)) enclose the SET domain. Residues cysteine 296, cysteine 299, cysteine 309, cysteine 312, cysteine 318, cysteine 322, histidine 331, and cysteine 335 each contribute to the Zn(2+) site. An MYND-type zinc finger spans residues 296 to 335 (CHRCLKHTLATVPCDGCSYAKYCSQECLQQAWELYHRTEC). Residues asparagine 427, 539 to 540 (NH), tyrosine 573, and phenylalanine 595 each bind S-adenosyl-L-methionine.

It belongs to the class V-like SAM-binding methyltransferase superfamily. Interacts (via MYND-type zinc finger) with HDAC1.

The protein resides in the nucleus. It is found in the cytoplasm. It catalyses the reaction L-lysyl-[protein] + S-adenosyl-L-methionine = N(6)-methyl-L-lysyl-[protein] + S-adenosyl-L-homocysteine + H(+). Functionally, protein-lysine N-methyltransferase. Monomethylates PRMT5, modulating its transcriptional activity. May also act as a histone methyltransferase. Plays a critical role in cardiac development. Acts as a key epigenetic regulator of gene expression during cardiac development via its dual activities as a methyltransferase and negative regulator of HDAC1. The chain is Protein-lysine N-methyltransferase SMYD4 from Homo sapiens (Human).